A 209-amino-acid polypeptide reads, in one-letter code: Small ribosomal subunit protein uS4 (209 aa).

In terms of domain architecture, S4 RNA-binding spans 99-160; the sequence is RRLDNVVYRL…GSKEMTLLGQ (62 aa).

It belongs to the universal ribosomal protein uS4 family. Part of the 30S ribosomal subunit. Contacts protein S5. The interaction surface between S4 and S5 is involved in control of translational fidelity.

Functionally, one of the primary rRNA binding proteins, it binds directly to 16S rRNA where it nucleates assembly of the body of the 30S subunit. Its function is as follows. With S5 and S12 plays an important role in translational accuracy. This chain is Small ribosomal subunit protein uS4, found in Koribacter versatilis (strain Ellin345).